The sequence spans 992 residues: Aminopeptidase Q (992 aa).

Residues 2–13 are Cytoplasmic-facing; that stretch reads GPPSSSGFYVSR. The chain crosses the membrane as a helical; Signal-anchor for type II membrane protein span at residues 14-34; it reads AVALLLAALAAALLLALAVLA. The Extracellular segment spans residues 35-992; the sequence is ALYGRCARVQ…RMTAWLRKNT (958 aa). Residues 47-92 are disordered; it reads DLHHSGVPDAASSPRGTQEEPLPTWPPRPTREPAGTATPGHWRPPG. The N-linked (GlcNAc...) asparagine glycan is linked to Asn-133. Glu-241 serves as a coordination point for substrate. 4 N-linked (GlcNAc...) asparagine glycosylation sites follow: Asn-262, Asn-289, Asn-347, and Asn-361. Substrate is bound at residue 380–384; that stretch reads SAMEN. His-416 contacts Zn(2+). The active-site Proton acceptor is Glu-417. Residues His-420 and Glu-439 each contribute to the Zn(2+) site. Tyr-505 acts as the Proton donor in catalysis. N-linked (GlcNAc...) asparagine glycosylation is found at Asn-555, Asn-584, Asn-602, Asn-609, Asn-655, Asn-811, Asn-850, and Asn-889.

It belongs to the peptidase M1 family. Zn(2+) serves as cofactor. In terms of tissue distribution, expressed in skin. Expression levels do not differ between dark and light skin areas.

It is found in the membrane. Its function is as follows. Metalloprotease which may be important for placentation by regulating biological activity of key peptides at the embryo-maternal interface. Involved in coat pigmentation patterns. During skin development, may be required to establish the periodicity of tabby markings, initiating a pre-pattern at or before hair follicle development. The sequence is that of Aminopeptidase Q (LVRN) from Felis catus (Cat).